Consider the following 104-residue polypeptide: Large ribosomal subunit protein uL24 (104 aa).

It belongs to the universal ribosomal protein uL24 family. In terms of assembly, part of the 50S ribosomal subunit.

Functionally, one of two assembly initiator proteins, it binds directly to the 5'-end of the 23S rRNA, where it nucleates assembly of the 50S subunit. Its function is as follows. One of the proteins that surrounds the polypeptide exit tunnel on the outside of the subunit. The chain is Large ribosomal subunit protein uL24 from Cronobacter sakazakii (strain ATCC BAA-894) (Enterobacter sakazakii).